A 438-amino-acid polypeptide reads, in one-letter code: Protein SPMIP7 (438 aa).

Testis-specific.

Essential for normal spermatogenesis. The polypeptide is Protein SPMIP7 (Homo sapiens (Human)).